A 142-amino-acid chain; its full sequence is FAD synthase (142 aa).

Residues Thr-9–Phe-10, His-14–His-17, and Asp-92 contribute to the ATP site.

Belongs to the archaeal FAD synthase family. As to quaternary structure, homodimer. The cofactor is a divalent metal cation.

The catalysed reaction is FMN + ATP + H(+) = FAD + diphosphate. It participates in cofactor biosynthesis; FAD biosynthesis; FAD from FMN: step 1/1. In terms of biological role, catalyzes the transfer of the AMP portion of ATP to flavin mononucleotide (FMN) to produce flavin adenine dinucleotide (FAD) coenzyme. In Haloferax volcanii (strain ATCC 29605 / DSM 3757 / JCM 8879 / NBRC 14742 / NCIMB 2012 / VKM B-1768 / DS2) (Halobacterium volcanii), this protein is FAD synthase.